A 132-amino-acid chain; its full sequence is Galectin-2 (132 aa).

Residues 4–131 (ELEVKNMDMK…GFNMSSFKLK (128 aa)) enclose the Galectin domain. 65-71 (WGQEQRE) lines the a beta-D-galactoside pocket.

As to quaternary structure, homodimer.

In terms of biological role, this protein binds beta-galactoside. Its physiological function is not yet known. The chain is Galectin-2 (LGALS2) from Homo sapiens (Human).